The primary structure comprises 20 residues: D-alpha-glycerophosphatase (20 aa).

As to quaternary structure, monomer. The cofactor is Mg(2+). Mn(2+) is required as a cofactor.

Its subcellular location is the cytoplasm. The protein operates within polyol metabolism; glycerol biosynthesis. The polypeptide is D-alpha-glycerophosphatase (Bacillus licheniformis).